Here is a 580-residue protein sequence, read N- to C-terminus: Serine/threonine-protein kinase PINK1, mitochondrial (580 aa).

The transit peptide at Met1–Leu77 directs the protein to the mitochondrion. The disordered stretch occupies residues Val28–Gly60. A helical transmembrane segment spans residues Gly94–Leu110. The required for outer membrane localization stretch occupies residues Ile111–Glu117. The 355-residue stretch at Tyr156–Leu510 folds into the Protein kinase domain. ATP contacts are provided by residues Ile162–Val170 and Lys218. Position 227 is a phosphoserine; by autocatalysis (Ser227). Asp361 (proton acceptor) is an active-site residue. Residue Ser401 is modified to Phosphoserine; by autocatalysis.

This sequence belongs to the protein kinase superfamily. Ser/Thr protein kinase family. In terms of assembly, upon mitochondrial depolarization, it forms a supercomplex with TOM and TIM23 complexes. PINK1-TOM-TIM23 supercomplex formation requires PINK1 interaction with TOMM20 and TOMM70 and is critical for PINK1 stabilization at the outer mitochondrial membrane, kinase activation and downstream mitophagy. Upon mitochondrial depolarization, interacts with TIMM23; the interaction is required for PINK1 accumulation at the outer mitochondrial membrane, kinase activation by autophosphorylation and PRKN recruitement to mitochondria. Interacts with PRKN. Interacts with FBXO7. Forms a complex with PRKN and PARK7. Interacts with NENF. The cofactor is Mg(2+). Proteolytically cleaved. In healthy cells, the precursor is continuously imported into the inner mitochondrial membrane (IMM), where it is proteolytically cleaved by mitochondrial-processing peptidase (MPP) and then undergoes further proteolytic cleavage by PARL or AFG3L2 to give rise to the 52 kDa short form. The 52 kDa short form is then released into the cytosol where it rapidly undergoes proteasome-dependent degradation. In unhealthy cells, when cellular stress conditions lead to the loss of mitochondrial membrane potential, mitochondrial import is impaired leading to the precursor accumulating on the outer mitochondrial membrane (OMM). If accumulation at the OMM fails and it is imported into the depolarized mitochondria, it undergoes cleavage by the IMM protease OMA1, promoting its subsequent degradation by the proteasome. Post-translationally, autophosphorylated. Loss of mitochondrial membrane potential results in the precursor accumulating on the outer mitochondrial membrane (OMM) where it is activated by autophosphorylation. Autophosphorylation at Ser-227 and Ser-401 is sufficient and essential for selective recruitment of PRKN to depolarized mitochondria, via PINK1-dependent phosphorylation of ubiquitin and maybe PRKN.

The protein localises to the mitochondrion outer membrane. It is found in the mitochondrion inner membrane. Its subcellular location is the cytoplasm. It localises to the cytosol. It catalyses the reaction L-seryl-[protein] + ATP = O-phospho-L-seryl-[protein] + ADP + H(+). The catalysed reaction is L-threonyl-[protein] + ATP = O-phospho-L-threonyl-[protein] + ADP + H(+). Functionally, serine/threonine-protein kinase which acts as a sensor of mitochondrial damage and protects against mitochondrial dysfunction during cellular stress. It phosphorylates mitochondrial proteins to coordinate mitochondrial quality control mechanisms that remove and replace dysfunctional mitochondrial components. Depending on the severity of mitochondrial damage, activity ranges from preventing apoptosis and stimulating mitochondrial biogenesis to eliminating severely damaged mitochondria via PINK1-PRKN-dependent mitophagy. When cellular stress results in irreversible mitochondrial damage, PINK1 accumulates at the outer mitochondrial membrane (OMM) where it phosphorylates pre-existing polyubiquitin chains at 'Ser-65', recruits PRKN from the cytosol to the OMM and activates PRKN by phosphorylation at 'Ser-65'; activated PRKN then ubiquinates VDAC1 and other OMM proteins to initiate mitophagy. The PINK1-PRKN pathway also promotes fission of damaged mitochondria through phosphorylation and PRKN-dependent degradation of mitochondrial proteins involved in fission such as MFN2. This prevents the refusion of unhealthy mitochondria with the mitochondrial network or initiates mitochondrial fragmentation facilitating their later engulfment by autophagosomes. Also promotes mitochondrial fission independently of PRKN and ATG7-mediated mitophagy, via the phosphorylation and activation of DNM1L. Regulates motility of damaged mitochondria by promoting the ubiquitination and subsequent degradation of MIRO1 and MIRO2; in motor neurons, this likely inhibits mitochondrial intracellular anterograde transport along the axons which probably increases the chance of the mitochondria undergoing mitophagy in the soma. Required for ubiquinone reduction by mitochondrial complex I by mediating phosphorylation of complex I subunit NDUFA10. Phosphorylates LETM1, positively regulating its mitochondrial calcium transport activity. In Rattus norvegicus (Rat), this protein is Serine/threonine-protein kinase PINK1, mitochondrial.